Here is a 404-residue protein sequence, read N- to C-terminus: Pyrophosphate--fructose 6-phosphate 1-phosphotransferase (404 aa).

G13 lines the diphosphate pocket. N108 serves as a coordination point for Mg(2+). Substrate-binding positions include 136–138, 180–182, E237, and 295–298; these read TID, MGR, and YLQR. Residue D138 is the Proton acceptor of the active site.

Belongs to the phosphofructokinase type A (PFKA) family. PPi-dependent PFK group II subfamily. Clade 'B2' sub-subfamily. In terms of assembly, homodimer. Mg(2+) is required as a cofactor.

The protein localises to the cytoplasm. The enzyme catalyses beta-D-fructose 6-phosphate + diphosphate = beta-D-fructose 1,6-bisphosphate + phosphate + H(+). It participates in carbohydrate degradation; glycolysis; D-glyceraldehyde 3-phosphate and glycerone phosphate from D-glucose: step 3/4. Its activity is regulated as follows. Non-allosteric. Functionally, catalyzes the phosphorylation of D-fructose 6-phosphate, the first committing step of glycolysis. Uses inorganic phosphate (PPi) as phosphoryl donor instead of ATP like common ATP-dependent phosphofructokinases (ATP-PFKs), which renders the reaction reversible, and can thus function both in glycolysis and gluconeogenesis. Consistently, PPi-PFK can replace the enzymes of both the forward (ATP-PFK) and reverse (fructose-bisphosphatase (FBPase)) reactions. This is Pyrophosphate--fructose 6-phosphate 1-phosphotransferase from Rhodospirillum rubrum (strain ATCC 11170 / ATH 1.1.1 / DSM 467 / LMG 4362 / NCIMB 8255 / S1).